The sequence spans 143 residues: MSTSSPFRVASKIVTAGCLCLPLFQRVLSDLSCEENEMCVNYDERYPDGWYIWFFLLIFLVVLLCGVVLFCLQCWLKRCGINPPRRTMAVFAVGDLDPVYGAEMAGSPTSGICHPTQNTELCSAPCFGALGPPPPYEEILKAN.

The signal sequence occupies residues 1 to 29 (MSTSSPFRVASKIVTAGCLCLPLFQRVLS). Residues 52–72 (IWFFLLIFLVVLLCGVVLFCL) form a helical membrane-spanning segment.

As to quaternary structure, interacts with WWOX.

Its subcellular location is the membrane. This is Transmembrane protein 207 from Mus musculus (Mouse).